Reading from the N-terminus, the 112-residue chain is UPF0145 protein RB3016 (112 aa).

The protein belongs to the UPF0145 family.

In Rhodopirellula baltica (strain DSM 10527 / NCIMB 13988 / SH1), this protein is UPF0145 protein RB3016.